The sequence spans 875 residues: Alanine--tRNA ligase (875 aa).

4 residues coordinate Zn(2+): His-564, His-568, Cys-666, and His-670.

Belongs to the class-II aminoacyl-tRNA synthetase family. Homotetramer. Requires Zn(2+) as cofactor.

The protein resides in the cytoplasm. The enzyme catalyses tRNA(Ala) + L-alanine + ATP = L-alanyl-tRNA(Ala) + AMP + diphosphate. Catalyzes the attachment of alanine to tRNA(Ala) in a two-step reaction: alanine is first activated by ATP to form Ala-AMP and then transferred to the acceptor end of tRNA(Ala). Also edits incorrectly charged Ser-tRNA(Ala) and Gly-tRNA(Ala) via its editing domain. The polypeptide is Alanine--tRNA ligase (Klebsiella pneumoniae subsp. pneumoniae (strain ATCC 700721 / MGH 78578)).